The chain runs to 39 residues: Photosystem II reaction center protein J (39 aa).

A helical membrane pass occupies residues 7 to 27; sequence IPLWLIATVGGTAALTVVGLF.

This sequence belongs to the PsbJ family. PSII is composed of 1 copy each of membrane proteins PsbA, PsbB, PsbC, PsbD, PsbE, PsbF, PsbH, PsbI, PsbJ, PsbK, PsbL, PsbM, PsbT, PsbX, PsbY, PsbZ, Psb30/Ycf12, at least 3 peripheral proteins of the oxygen-evolving complex and a large number of cofactors. It forms dimeric complexes.

The protein localises to the plastid. It is found in the chloroplast thylakoid membrane. Functionally, one of the components of the core complex of photosystem II (PSII). PSII is a light-driven water:plastoquinone oxidoreductase that uses light energy to abstract electrons from H(2)O, generating O(2) and a proton gradient subsequently used for ATP formation. It consists of a core antenna complex that captures photons, and an electron transfer chain that converts photonic excitation into a charge separation. In Rhodomonas salina (Cryptomonas salina), this protein is Photosystem II reaction center protein J.